A 442-amino-acid chain; its full sequence is UDP-N-acetylmuramoylalanine--D-glutamate ligase (442 aa).

Belongs to the MurCDEF family.

The protein resides in the cytoplasm. The enzyme catalyses UDP-N-acetyl-alpha-D-muramoyl-L-alanine + D-glutamate + ATP = UDP-N-acetyl-alpha-D-muramoyl-L-alanyl-D-glutamate + ADP + phosphate + H(+). It participates in cell wall biogenesis; peptidoglycan biosynthesis. Its function is as follows. Cell wall formation. Catalyzes the addition of glutamate to the nucleotide precursor UDP-N-acetylmuramoyl-L-alanine (UMA). The sequence is that of UDP-N-acetylmuramoylalanine--D-glutamate ligase from Buchnera aphidicola subsp. Baizongia pistaciae (strain Bp).